A 138-amino-acid polypeptide reads, in one-letter code: Secreted RxLR effector protein 51 (138 aa).

Positions 1–19 (MRSSTILFVLGVAMVAVNG) are cleaved as a signal peptide. The RxLR-dEER motif lies at 38–53 (RLLRSNSGKHKTDEER). N-linked (GlcNAc...) asparagine glycosylation occurs at N101.

Belongs to the RxLR effector family.

Its subcellular location is the secreted. It is found in the host nucleus. In terms of biological role, secreted effector that completely suppresses the host cell death induced by cell death-inducing proteins. The protein is Secreted RxLR effector protein 51 of Plasmopara viticola (Downy mildew of grapevine).